A 126-amino-acid chain; its full sequence is Large ribosomal subunit protein bL17 (126 aa).

It belongs to the bacterial ribosomal protein bL17 family. As to quaternary structure, part of the 50S ribosomal subunit. Contacts protein L32.

The sequence is that of Large ribosomal subunit protein bL17 from Vibrio parahaemolyticus serotype O3:K6 (strain RIMD 2210633).